We begin with the raw amino-acid sequence, 301 residues long: Aquaporin-10 (301 aa).

Residues 1-22 are Cytoplasmic-facing; the sequence is MVFTQAPAEIMGHLRIRSLLAR. A helical transmembrane segment spans residues 23 to 41; that stretch reads QCLAEFLGVFVLMLLTQGA. The Extracellular portion of the chain corresponds to 42 to 55; it reads VAQAVTSGETKGNF. A helical transmembrane segment spans residues 56–75; sequence FTMFLAGSLAVTIAIYVGGN. The Cytoplasmic portion of the chain corresponds to 76–77; the sequence is VS. Residues 78 to 90 constitute an intramembrane region (discontinuously helical); it reads GAHLNPAFSLAMC. The short motif at 82-84 is the NPA 1 element; sequence NPA. Residues 91-96 lie on the Cytoplasmic side of the membrane; the sequence is IVGRLP. The chain crosses the membrane as a helical span at residues 97-121; the sequence is WVKLPIYILVQLLSAFCASGATYVL. Topologically, residues 122–158 are extracellular; that stretch reads YHDALQNYTGGNLTVTGPKETASIFATYPAPYLSLNN. N-linked (GlcNAc...) asparagine glycosylation is found at Asn128 and Asn133. A helical membrane pass occupies residues 159 to 176; the sequence is GFLDQVLGTGMLIVGLLA. The Cytoplasmic segment spans residues 177-188; the sequence is ILDRRNKGVPAG. Residues 189 to 205 form a helical membrane-spanning segment; sequence LEPVVVGMLILALGLSM. The Extracellular segment spans residues 206–208; it reads GAN. The segment at residues 209-223 is an intramembrane region (discontinuously helical); sequence CGIPLNPARDLGPRL. An NPA 2 motif is present at residues 214–216; sequence NPA. The Extracellular portion of the chain corresponds to 224-241; it reads FTYVAGWGPEVFSAGNGW. Residues 242–262 traverse the membrane as a helical segment; sequence WWVPVVAPLVGATVGTATYQL. The Cytoplasmic segment spans residues 263 to 301; sequence LVALHHPEGPEPAQDLVSAQHKASELETPASAQMLECKL.

Belongs to the MIP/aquaporin (TC 1.A.8) family. Homotetramer; each monomer provides an independent glycerol/water pore. In terms of processing, N-glycosylation at Asn-133 increases the stability of the protein but has no effect on its activity. As to expression, detected in epithelial cells on villi in the ileum, and also in stomach, jejunum, colon, rectum, white adipose tissue and placenta (at protein level). Expressed in duodenum and jejunum. Highest expression in absorptive epithelial cells at the tips of villi in the jejunum. Detected in subcutaneous adipose tissue.

It localises to the apical cell membrane. It is found in the cell membrane. Its subcellular location is the lipid droplet. The catalysed reaction is glycerol(in) = glycerol(out). It carries out the reaction H2O(in) = H2O(out). The enzyme catalyses urea(in) = urea(out). With respect to regulation, glycerol transport is regulated by pH, with the porin being permeable to glycerol at pH 5.5 but not at pH 7.4. Water permeability, however, is not influenced by pH. Functionally, aquaglyceroporins form homotetrameric transmembrane channels, with each monomer independently mediating glycerol and water transport across the plasma membrane along their osmotic gradient. Could also be permeable to urea. Among aquaglyceroporins, it exhibits a unique pH-gated glycerol transport activity, being more active at acidic pH. It most likely plays a central role in the efflux of glycerol formed during triglyceride hydrolysis in adipocytes and in glycerol uptake by enterocytes, as both processes occur and are stimulated at acidic pH. This is Aquaporin-10 from Homo sapiens (Human).